Consider the following 157-residue polypeptide: Phosphopantetheine adenylyltransferase (157 aa).

Position 9 (serine 9) interacts with substrate. ATP contacts are provided by residues serine 9–phenylalanine 10 and histidine 17. Residues lysine 41, threonine 73, and arginine 87 each coordinate substrate. Residues glycine 88–arginine 90, glutamate 98, and tyrosine 122–serine 128 each bind ATP.

It belongs to the bacterial CoaD family. Homohexamer. The cofactor is Mg(2+).

It localises to the cytoplasm. The enzyme catalyses (R)-4'-phosphopantetheine + ATP + H(+) = 3'-dephospho-CoA + diphosphate. It participates in cofactor biosynthesis; coenzyme A biosynthesis; CoA from (R)-pantothenate: step 4/5. Its function is as follows. Reversibly transfers an adenylyl group from ATP to 4'-phosphopantetheine, yielding dephospho-CoA (dPCoA) and pyrophosphate. The protein is Phosphopantetheine adenylyltransferase of Oenococcus oeni (strain ATCC BAA-331 / PSU-1).